Here is a 300-residue protein sequence, read N- to C-terminus: Bifunctional protein FolD (300 aa).

NADP(+)-binding positions include 169–171 (GHS) and Ile235.

The protein belongs to the tetrahydrofolate dehydrogenase/cyclohydrolase family. In terms of assembly, homodimer.

It carries out the reaction (6R)-5,10-methylene-5,6,7,8-tetrahydrofolate + NADP(+) = (6R)-5,10-methenyltetrahydrofolate + NADPH. The catalysed reaction is (6R)-5,10-methenyltetrahydrofolate + H2O = (6R)-10-formyltetrahydrofolate + H(+). Its pathway is one-carbon metabolism; tetrahydrofolate interconversion. In terms of biological role, catalyzes the oxidation of 5,10-methylenetetrahydrofolate to 5,10-methenyltetrahydrofolate and then the hydrolysis of 5,10-methenyltetrahydrofolate to 10-formyltetrahydrofolate. The chain is Bifunctional protein FolD from Rhodobacter capsulatus (strain ATCC BAA-309 / NBRC 16581 / SB1003).